The chain runs to 208 residues: Small ribosomal subunit protein uS4 (208 aa).

The S4 RNA-binding domain occupies 98–161; it reads RRLDNVIYRL…RKIPVIAEAQ (64 aa).

It belongs to the universal ribosomal protein uS4 family. In terms of assembly, part of the 30S ribosomal subunit. Contacts protein S5. The interaction surface between S4 and S5 is involved in control of translational fidelity.

Functionally, one of the primary rRNA binding proteins, it binds directly to 16S rRNA where it nucleates assembly of the body of the 30S subunit. With S5 and S12 plays an important role in translational accuracy. This chain is Small ribosomal subunit protein uS4, found in Nitratidesulfovibrio vulgaris (strain DSM 19637 / Miyazaki F) (Desulfovibrio vulgaris).